Reading from the N-terminus, the 277-residue chain is MALKHFNPITPGQRQLVIVDRSELYKGKPVKSLTEGLSKKGGRNNTGRITVRFQGGGHKRSYRFIDFKRRKLDVVGTVERLEYDPNRTAFIALIRYTDGELAYILAPQRLAVGDQVVAGNFVDVKPGNAMPLSSMPVGTIIHNVELKPGKGGQIARSAGTYAQLVGRDQGMAILRLNSGEQRLVSGACFASVGAVSNPDHGNINDGKAGRSVWRGKRPHVRGVAMNPVDHPHGGGEGRTSGGRHPVTPWGKPTKGKKTRSNKATDKFIMRSRHQRKK.

A disordered region spans residues 222–277 (GVAMNPVDHPHGGGEGRTSGGRHPVTPWGKPTKGKKTRSNKATDKFIMRSRHQRKK).

It belongs to the universal ribosomal protein uL2 family. In terms of assembly, part of the 50S ribosomal subunit. Forms a bridge to the 30S subunit in the 70S ribosome.

One of the primary rRNA binding proteins. Required for association of the 30S and 50S subunits to form the 70S ribosome, for tRNA binding and peptide bond formation. It has been suggested to have peptidyltransferase activity; this is somewhat controversial. Makes several contacts with the 16S rRNA in the 70S ribosome. In Brucella ovis (strain ATCC 25840 / 63/290 / NCTC 10512), this protein is Large ribosomal subunit protein uL2.